Reading from the N-terminus, the 620-residue chain is Glutathione-regulated potassium-efflux system protein KefC (620 aa).

Transmembrane regions (helical) follow at residues 4-24, 26-46, 54-74, 90-110, 114-134, 149-169, 178-198, 218-238, 270-290, 294-314, 327-347, and 359-379; these read HTLLQALIYLGSAALIVPIAV, LGLGSVLGYLIAGCIIGPWGL, SILHFAEIGVVLMLFVIGLEL, GALQMVVCGGLIGLFCMFLGL, VAELIGMTLALSSTAIAMQAM, FAVLLFQDIAAIPLVAMIPLL, LGAFALSALKVAGALALVVLL, VFSAVALFLVFGFGLLLEEVG, GLLLGLFFIGVGMSIDFGTLV, LRILLLLAGFLAIKIVMLWLV, WFAVLLGQGSKFAFVVFGAAQ, and ALTLAVALSMAATPIFLVLLT. The RCK N-terminal domain maps to 399–518; it reads QPRVIVAGFG…AGVAMPERET (120 aa). A disordered region spans residues 599–620; sequence QGTAEGKHSGEAADEPEVKPSI.

This sequence belongs to the monovalent cation:proton antiporter 2 (CPA2) transporter (TC 2.A.37) family. KefC subfamily. Homodimer. Interacts with the regulatory subunit KefF.

It is found in the cell inner membrane. Pore-forming subunit of a potassium efflux system that confers protection against electrophiles. Catalyzes K(+)/H(+) antiport. This Salmonella choleraesuis (strain SC-B67) protein is Glutathione-regulated potassium-efflux system protein KefC.